The sequence spans 232 residues: Uracil-DNA glycosylase (232 aa).

D66 (proton acceptor) is an active-site residue.

This sequence belongs to the uracil-DNA glycosylase (UDG) superfamily. UNG family.

Its subcellular location is the cytoplasm. The catalysed reaction is Hydrolyzes single-stranded DNA or mismatched double-stranded DNA and polynucleotides, releasing free uracil.. Excises uracil residues from the DNA which can arise as a result of misincorporation of dUMP residues by DNA polymerase or due to deamination of cytosine. The chain is Uracil-DNA glycosylase from Lactobacillus acidophilus (strain ATCC 700396 / NCK56 / N2 / NCFM).